Reading from the N-terminus, the 707-residue chain is Protein MICRORCHIDIA 7 (707 aa).

2 stretches are compositionally biased toward basic and acidic residues: residues Met-1 to Ile-11 and Asp-575 to Gly-587. Disordered regions lie at residues Met-1–Pro-22 and Glu-568–Asp-619. A compositionally biased stretch (polar residues) spans Ser-590 to Asn-613. Positions Gly-620 to Lys-701 form a coiled coil. Residues Arg-633–Glu-640 carry the Nuclear localization signal motif.

It belongs to the MORC ATPase protein family. In terms of assembly, homodimer and heterodimer. Component of an RNA-directed DNA methylation (RdDM) complex. Forms homomeric complexes. It depends on Mg(2+) as a cofactor. Mn(2+) serves as cofactor.

The protein localises to the nucleus. Exhibits ATPase activity. Binds DNA/RNA in a non-specific manner and exhibits endonuclease activity. Probably involved in DNA repair. Involved in RNA-directed DNA methylation (RdDM) as a component of the RdDM machinery and required for gene silencing. May also be involved in the regulation of chromatin architecture to maintain gene silencing. Together with MORC4, acts to suppress a wide set of non-methylated protein-coding genes, especially involved in pathogen response. Positive regulators of defense against the oomycete Hyaloperonospora arabidopsidis (Hpa). The sequence is that of Protein MICRORCHIDIA 7 from Arabidopsis thaliana (Mouse-ear cress).